A 202-amino-acid polypeptide reads, in one-letter code: Cryptic protein (202 aa).

The first 35 residues, 1 to 35 (MRANSPTQGISLKMHQARPLFLVTVALQLIGLGYS), serve as a signal peptide directing secretion. The N-linked (GlcNAc...) asparagine glycan is linked to N65. Residues 94–123 (PVSRCCHNGGTCVLGSFCVCPAYFTGRYCE) form the EGF-like domain. 3 disulfides stabilise this stretch: C98–C105, C99–C111, and C113–C122. D166 carries GPI-anchor amidated aspartate lipidation. Positions 167 to 202 (LKSFLSSGARGSRECSIPSLLLLVLCLLLQGVAGKG) are cleaved as a propeptide — removed in mature form.

It belongs to the EGF-CFC (Cripto-1/FRL1/Cryptic) family. Post-translationally, N-glycosylated. In terms of tissue distribution, no expressed in adult tissues.

The protein localises to the cell membrane. It localises to the secreted. In terms of biological role, nodal coreceptor involved in the correct establishment of the left-right axis. May play a role in mesoderm and/or neural patterning during gastrulation. The chain is Cryptic protein (Cfc1) from Mus musculus (Mouse).